A 287-amino-acid polypeptide reads, in one-letter code: Putative B3 domain-containing protein Os08g0157700 (287 aa).

The span at alanine 17 to glutamine 29 shows a compositional bias: acidic residues. Residues alanine 17–alanine 36 form a disordered region. The segment at residues phenylalanine 71–histidine 168 is a DNA-binding region (TF-B3).

The protein resides in the nucleus. The chain is Putative B3 domain-containing protein Os08g0157700 from Oryza sativa subsp. japonica (Rice).